The chain runs to 503 residues: MTLDQVRIPFLVEQTYPIIVPSYAGWFDMSKIHDIERRSNPEFFNGKSPLKTPSIYKDYRDFMINSYRLEPNEYLTVTACRRNLVGDVCAIIRVHAFLEQWGLINYQIDPETRPAFRLPPISGHVQAISNTPIVTQEMLAQHPPPSTVGGSSSQEFVKLEEKHYSPSLNAMEQTSPKEEDEKSDKVPRVDKVCFTCGVNCSQTWYHNLKNKKYDICPNCYKQGRFSSSFNSSDFLCMDAIDFNHDEEKPWSNQETLLLLEAIETYGDDWNQIALHVGSRTKEQCLIHFLQIPIEDPYRQKLQGDFSPFKKGFLPFDENENPVLSTLTYLASIVQQGMKERKQNESVKQGETSFGNSEFKNPLERVAYYALKSAAQKAKLIAAFENRQLRRLVFSLIQAQLEKLQLKMKVLEQLEKMCSLELSELDLRGKNLLLSRLSTKKMLLAFNKKLEEAVNLGGEDGLKIIDDLMSTEHAEALLTFEMPTATTVSPLSKQYPDKFRTIAL.

The 98-residue stretch at 18–115 (IIVPSYAGWF…YQIDPETRPA (98 aa)) folds into the SWIRM domain. Residue Ser-175 is modified to Phosphoserine. The ZZ-type; degenerate zinc-finger motif lies at 188–242 (RVDKVCFTCGVNCSQTWYHNLKNKKYDICPNCYKQGRFSSSFNSSDFLCMDAIDF). Zn(2+) is bound by residues Cys-193, Cys-196, Cys-216, and Cys-219. The SANT domain occupies 245–296 (DEEKPWSNQETLLLLEAIETYGDDWNQIALHVGSRTKEQCLIHFLQIPIEDP). Residue Ser-306 is modified to Phosphoserine.

It belongs to the SMARCC family. Component of the RSC complex composed of at least arp9, arp42, rsc1, rsc4, rsc7, rsc9, rsc58, sfh1, snf21, ssr1, ssr2, ssr3 and ssr4. The complex interacts with histone and histone variant components of centromeric chromatin. Component of the SWI/SNF global transcription activator complex composed of at least arp9, arp42, snf5, snf22, snf30, sbf59, sol1, ssr1, ssr2, ssr3, ssr4 and tfg3.

It is found in the cytoplasm. The protein resides in the nucleus. In terms of biological role, component of the chromatin structure remodeling complex (RSC), which is involved in transcription regulation and nucleosome positioning. Controls particularly membrane and organelle development genes. Part of the SWI/SNF complex, an ATP-dependent chromatin remodeling complex, required for the positive and negative regulation of gene expression of a large number of genes. It changes chromatin structure by altering DNA-histone contacts within a nucleosome, leading eventually to a change in nucleosome position, thus facilitating or repressing binding of gene-specific transcription factors. This chain is SWI/SNF and RSC complexes subunit ssr2 (ssr2), found in Schizosaccharomyces pombe (strain 972 / ATCC 24843) (Fission yeast).